A 464-amino-acid polypeptide reads, in one-letter code: tRNA modification GTPase MnmE (464 aa).

(6S)-5-formyl-5,6,7,8-tetrahydrofolate-binding residues include Arg25, Glu87, and Lys130. Positions 226–386 constitute a TrmE-type G domain; sequence GLSVVLAGQP…LRAELLRIAG (161 aa). Asn236 is a binding site for K(+). GTP is bound by residues 236-241, 255-261, and 280-283; these read NVGKSS, TPIAGTT, and DTAG. Ser240 contributes to the Mg(2+) binding site. Thr255, Ile257, and Thr260 together coordinate K(+). Thr261 lines the Mg(2+) pocket. Lys464 lines the (6S)-5-formyl-5,6,7,8-tetrahydrofolate pocket.

Belongs to the TRAFAC class TrmE-Era-EngA-EngB-Septin-like GTPase superfamily. TrmE GTPase family. In terms of assembly, homodimer. Heterotetramer of two MnmE and two MnmG subunits. K(+) serves as cofactor.

It is found in the cytoplasm. Its function is as follows. Exhibits a very high intrinsic GTPase hydrolysis rate. Involved in the addition of a carboxymethylaminomethyl (cmnm) group at the wobble position (U34) of certain tRNAs, forming tRNA-cmnm(5)s(2)U34. The protein is tRNA modification GTPase MnmE of Burkholderia orbicola (strain MC0-3).